The following is a 427-amino-acid chain: tRNA(Ile)-lysidine synthase (427 aa).

18 to 23 (SGGLDS) serves as a coordination point for ATP.

This sequence belongs to the tRNA(Ile)-lysidine synthase family.

It is found in the cytoplasm. The catalysed reaction is cytidine(34) in tRNA(Ile2) + L-lysine + ATP = lysidine(34) in tRNA(Ile2) + AMP + diphosphate + H(+). Ligates lysine onto the cytidine present at position 34 of the AUA codon-specific tRNA(Ile) that contains the anticodon CAU, in an ATP-dependent manner. Cytidine is converted to lysidine, thus changing the amino acid specificity of the tRNA from methionine to isoleucine. The sequence is that of tRNA(Ile)-lysidine synthase from Pseudomonas putida (strain ATCC 47054 / DSM 6125 / CFBP 8728 / NCIMB 11950 / KT2440).